Here is a 1355-residue protein sequence, read N- to C-terminus: Phospholipid-transporting ATPase DRS2 (1355 aa).

Over residues 1–15 the composition is skewed to basic and acidic residues; it reads MNDDRETPPKRKPGE. Positions 1–50 are disordered; the sequence is MNDDRETPPKRKPGEDDTLFDIDFLDDTTSHSGSRSKVTNSHANANYIPP. An involved in autoinhibition region spans residues 1-104; it reads MNDDRETPPK…SDAYQPQSLR (104 aa). Residues 1–221 are Cytoplasmic-facing; that stretch reads MNDDRETPPK…TFLPKFLFQE (221 aa). Acidic residues predominate over residues 16–26; that stretch reads DDTLFDIDFLD. The segment covering 30–44 has biased composition (polar residues); the sequence is SHSGSRSKVTNSHAN. At serine 102 the chain carries Phosphoserine. A helical membrane pass occupies residues 222–242; the sequence is FSKYANLFFLCTSAIQQVPHV. The interval 237-238 is involved in phosphatidylserine substrate recognition; the sequence is QQ. Residues 243 to 246 are Lumenal-facing; the sequence is SPTN. A helical transmembrane segment spans residues 247-267; it reads RYTTIGTLLVVLIVSAMKECI. Residues 268 to 449 are Cytoplasmic-facing; sequence EDIKRANSDK…VEKIINRQII (182 aa). A helical membrane pass occupies residues 450–470; that stretch reads ALFTVLIVLILISSIGNVIMS. Residues 471–490 lie on the Lumenal side of the membrane; that stretch reads TADAKHLSYLYLEGTNKAGL. A helical membrane pass occupies residues 491–511; it reads FFKDFLTFWILFSNLVPISLF. Residues 512–1012 lie on the Cytoplasmic side of the membrane; the sequence is VTVELIKYYQ…WSYQRISVAI (501 aa). Catalysis depends on aspartate 560, which acts as the 4-aspartylphosphate intermediate. ATP contacts are provided by aspartate 560, lysine 561, threonine 562, glutamate 655, phenylalanine 698, serine 700, lysine 703, lysine 721, arginine 755, threonine 756, threonine 835, glycine 836, aspartate 837, arginine 928, and lysine 934. Aspartate 560 contacts Mg(2+). Threonine 562 is a binding site for Mg(2+). Aspartate 954 is a Mg(2+) binding site. Positions 957 and 958 each coordinate ATP. Aspartate 958 serves as a coordination point for Mg(2+). The chain crosses the membrane as a helical span at residues 1013-1033; that stretch reads LYSFYKNTALYMTQFWYVFAN. Residues 1034–1043 lie on the Lumenal side of the membrane; it reads AFSGQSIMES. The helical transmembrane segment at 1044–1064 threads the bilayer; sequence WTMSFYNLFFTVWPPFVIGVF. Residues 1065–1094 lie on the Cytoplasmic side of the membrane; the sequence is DQFVSSRLLERYPQLYKLGQKGQFFSVYIF. Residues 1095–1115 traverse the membrane as a helical segment; the sequence is WGWIINGFFHSAIVFIGTILI. Residues 1116–1131 lie on the Lumenal side of the membrane; it reads YRYGFALNMHGELADH. Residues 1132-1152 form a helical membrane-spanning segment; that stretch reads WSWGVTVYTTSVIIVLGKAAL. Lysine 1149 lines the a 1,2-diacyl-sn-glycero-3-phospho-(1D-myo-inositol 4-phosphate) pocket. Topologically, residues 1153 to 1161 are cytoplasmic; it reads VTNQWTKFT. The helical transmembrane segment at 1162 to 1182 threads the bilayer; the sequence is LIAIPGSLLFWLIFFPIYASI. At 1183-1202 the chain is on the lumenal side; the sequence is FPHANISREYYGVVKHTYGS. A helical membrane pass occupies residues 1203 to 1223; the sequence is GVFWLTLIVLPIFALVRDFLW. Residues arginine 1219, tryptophan 1223, lysine 1224, tyrosine 1235, and histidine 1236 each contribute to the a 1,2-diacyl-sn-glycero-3-phospho-(1D-myo-inositol 4-phosphate) site. Over 1224 to 1355 the chain is Cytoplasmic; sequence KYYKRMYEPE…SSRDDISFDI (132 aa). The segment at 1230–1282 is interaction with GEA2; that stretch reads YEPETYHVIQEMQKYNISDSRPHVQQFQNAIRKVRQVQRMKKQRGFAFSQAEE. Positions 1231 to 1309 are involved in autoinhibition; sequence EPETYHVIQE…KYGELQDASA (79 aa). The segment at 1305–1355 is disordered; the sequence is QDASANPFNDNNGLGSNDFESAEPFIENPFADGNQNSNRFSSSRDDISFDI. Polar residues predominate over residues 1307–1323; sequence ASANPFNDNNGLGSNDF. The span at 1346–1355 shows a compositional bias: basic and acidic residues; it reads SSRDDISFDI.

This sequence belongs to the cation transport ATPase (P-type) (TC 3.A.3) family. Type IV subfamily. Component of a flippase complex consisting of DRS2 and CDC50. Interacts with CDC50; the interaction is direct, is required for their mutual export from the endoplasmic reticulum, and preferentially occurs when DRS2 is in the E2P state. Interacts (via C-terminus) with GEA2 (via SEC7 domain); the interaction is direct. Interacts with GEA1. The cofactor is Mg(2+).

Its subcellular location is the golgi apparatus. The protein resides in the trans-Golgi network membrane. It localises to the endosome membrane. The catalysed reaction is ATP + H2O + phospholipidSide 1 = ADP + phosphate + phospholipidSide 2.. It carries out the reaction a 1,2-diacyl-sn-glycero-3-phospho-L-serine(out) + ATP + H2O = a 1,2-diacyl-sn-glycero-3-phospho-L-serine(in) + ADP + phosphate + H(+). The enzyme catalyses a 1,2-diacyl-sn-glycero-3-phosphoethanolamine(out) + ATP + H2O = a 1,2-diacyl-sn-glycero-3-phosphoethanolamine(in) + ADP + phosphate + H(+). Allosterically activated by binding 1,2-diacyl-sn-glycero-3-phospho-(1D-myo-inositol 4-phosphate) (phosphatidylinositol 4-phosphate). Inhibited by orthovanadate, N-ethylmaleimide, trifluoroberyllate and tetrafluoroaluminate; orthovanadate and N-ethylmaleimide inhibit phosphorylation of the active site aspartic acid. The ATPase activity is not potently stimulated by phosphatidylinositol 3-phosphate and phosphatidylinositol 5-phosphate, phosphatidylinositol 4,5-bisphosphate or phosphatidylcholine. Not inhibited by azide. In terms of biological role, catalytic component of a P4-ATPase flippase complex which catalyzes the hydrolysis of ATP coupled to the transport of phosphatidylserine and small amounts of ethanolamine from the lumen to the cytosolic leaflet of the trans-Golgi network and ensures the maintenance of asymmetric distribution of phospholipids. Contributes to clathrin-coated vesicle formation, endocytosis, and protein trafficking between the Golgi and endosomal system. Does not appear to transport phosphatidylcholine or sphingomyelin. This is Phospholipid-transporting ATPase DRS2 from Saccharomyces cerevisiae (strain ATCC 204508 / S288c) (Baker's yeast).